A 383-amino-acid chain; its full sequence is 8-amino-7-oxononanoate synthase (383 aa).

Substrate is bound at residue R23. 110-111 (GF) lines the pyridoxal 5'-phosphate pocket. Position 135 (H135) interacts with substrate. Pyridoxal 5'-phosphate is bound by residues S181, H209, and T235. K238 carries the post-translational modification N6-(pyridoxal phosphate)lysine. T351 is a substrate binding site.

The protein belongs to the class-II pyridoxal-phosphate-dependent aminotransferase family. BioF subfamily. In terms of assembly, homodimer. Pyridoxal 5'-phosphate serves as cofactor.

The catalysed reaction is 6-carboxyhexanoyl-[ACP] + L-alanine + H(+) = (8S)-8-amino-7-oxononanoate + holo-[ACP] + CO2. It functions in the pathway cofactor biosynthesis; biotin biosynthesis. In terms of biological role, catalyzes the decarboxylative condensation of pimeloyl-[acyl-carrier protein] and L-alanine to produce 8-amino-7-oxononanoate (AON), [acyl-carrier protein], and carbon dioxide. The protein is 8-amino-7-oxononanoate synthase of Aliivibrio fischeri (strain ATCC 700601 / ES114) (Vibrio fischeri).